The sequence spans 525 residues: 2,3-bisphosphoglycerate-independent phosphoglycerate mutase (525 aa).

2 residues coordinate Mn(2+): Asp18 and Ser68. Ser68 serves as the catalytic Phosphoserine intermediate. Residues His129, 159-160 (RD), Arg194, Arg200, 269-272 (RADR), and Lys345 contribute to the substrate site. Mn(2+) contacts are provided by Asp413, His417, Asp454, His455, and His473.

Belongs to the BPG-independent phosphoglycerate mutase family. As to quaternary structure, monomer. It depends on Mn(2+) as a cofactor.

The catalysed reaction is (2R)-2-phosphoglycerate = (2R)-3-phosphoglycerate. It functions in the pathway carbohydrate degradation; glycolysis; pyruvate from D-glyceraldehyde 3-phosphate: step 3/5. Catalyzes the interconversion of 2-phosphoglycerate and 3-phosphoglycerate. The polypeptide is 2,3-bisphosphoglycerate-independent phosphoglycerate mutase (Chromohalobacter salexigens (strain ATCC BAA-138 / DSM 3043 / CIP 106854 / NCIMB 13768 / 1H11)).